The following is a 131-amino-acid chain: Transcription antitermination protein NusB (131 aa).

Belongs to the NusB family.

Functionally, involved in transcription antitermination. Required for transcription of ribosomal RNA (rRNA) genes. Binds specifically to the boxA antiterminator sequence of the ribosomal RNA (rrn) operons. The chain is Transcription antitermination protein NusB from Campylobacter concisus (strain 13826).